The sequence spans 310 residues: Lipoyl synthase (310 aa).

The [4Fe-4S] cluster site is built by cysteine 54, cysteine 59, cysteine 65, cysteine 80, cysteine 84, cysteine 87, and serine 295. A Radical SAM core domain is found at 66-284 (FASGTATFLI…LFGEDNLGFM (219 aa)).

Belongs to the radical SAM superfamily. Lipoyl synthase family. [4Fe-4S] cluster is required as a cofactor.

The protein resides in the cytoplasm. The enzyme catalyses [[Fe-S] cluster scaffold protein carrying a second [4Fe-4S](2+) cluster] + N(6)-octanoyl-L-lysyl-[protein] + 2 oxidized [2Fe-2S]-[ferredoxin] + 2 S-adenosyl-L-methionine + 4 H(+) = [[Fe-S] cluster scaffold protein] + N(6)-[(R)-dihydrolipoyl]-L-lysyl-[protein] + 4 Fe(3+) + 2 hydrogen sulfide + 2 5'-deoxyadenosine + 2 L-methionine + 2 reduced [2Fe-2S]-[ferredoxin]. Its pathway is protein modification; protein lipoylation via endogenous pathway; protein N(6)-(lipoyl)lysine from octanoyl-[acyl-carrier-protein]: step 2/2. Functionally, catalyzes the radical-mediated insertion of two sulfur atoms into the C-6 and C-8 positions of the octanoyl moiety bound to the lipoyl domains of lipoate-dependent enzymes, thereby converting the octanoylated domains into lipoylated derivatives. The sequence is that of Lipoyl synthase from Prochlorococcus marinus (strain MIT 9215).